The sequence spans 824 residues: FT-interacting protein 1 (824 aa).

C2 domains follow at residues 48–170 (WLGL…PQWY), 217–341 (VRGE…SRWF), and 385–522 (YISD…THAY). 3 consecutive transmembrane segments (helical) span residues 625 to 645 (AVSL…VCHW), 657 to 677 (LLLI…LYMF), and 764 to 784 (ATCL…VTPF).

Belongs to the MCTP family. In terms of assembly, interacts with RFT1 and PI4KG4. Specifically expressed in the phloem including companion cells.

Its subcellular location is the endoplasmic reticulum membrane. Involved in the export of the long day-specific flower-promoting signal (florigen) RFT1 from the phloem companion cells to sieve elements. Promotes flowering under long days through the transport of RFT1 from the leaves to the shoot apical meristem (SAM). This Oryza sativa subsp. japonica (Rice) protein is FT-interacting protein 1.